The chain runs to 92 residues: Elongation factor 1-beta (92 aa).

Belongs to the EF-1-beta/EF-1-delta family.

Functionally, promotes the exchange of GDP for GTP in EF-1-alpha/GDP, thus allowing the regeneration of EF-1-alpha/GTP that could then be used to form the ternary complex EF-1-alpha/GTP/AAtRNA. The chain is Elongation factor 1-beta from Pyrobaculum arsenaticum (strain DSM 13514 / JCM 11321 / PZ6).